We begin with the raw amino-acid sequence, 220 residues long: ATP phosphoribosyltransferase (220 aa).

It belongs to the ATP phosphoribosyltransferase family. Short subfamily. In terms of assembly, heteromultimer composed of HisG and HisZ subunits.

The protein localises to the cytoplasm. It carries out the reaction 1-(5-phospho-beta-D-ribosyl)-ATP + diphosphate = 5-phospho-alpha-D-ribose 1-diphosphate + ATP. It functions in the pathway amino-acid biosynthesis; L-histidine biosynthesis; L-histidine from 5-phospho-alpha-D-ribose 1-diphosphate: step 1/9. In terms of biological role, catalyzes the condensation of ATP and 5-phosphoribose 1-diphosphate to form N'-(5'-phosphoribosyl)-ATP (PR-ATP). Has a crucial role in the pathway because the rate of histidine biosynthesis seems to be controlled primarily by regulation of HisG enzymatic activity. This chain is ATP phosphoribosyltransferase, found in Anaeromyxobacter sp. (strain Fw109-5).